The following is a 301-amino-acid chain: Acetylglutamate kinase (301 aa).

Substrate contacts are provided by residues Gly68–Gly69, Arg90, and Asn195.

This sequence belongs to the acetylglutamate kinase family. ArgB subfamily.

It is found in the cytoplasm. It catalyses the reaction N-acetyl-L-glutamate + ATP = N-acetyl-L-glutamyl 5-phosphate + ADP. The protein operates within amino-acid biosynthesis; L-arginine biosynthesis; N(2)-acetyl-L-ornithine from L-glutamate: step 2/4. In terms of biological role, catalyzes the ATP-dependent phosphorylation of N-acetyl-L-glutamate. In Pseudomonas paraeruginosa (strain DSM 24068 / PA7) (Pseudomonas aeruginosa (strain PA7)), this protein is Acetylglutamate kinase.